The primary structure comprises 117 residues: Large ribosomal subunit protein uL18 (117 aa).

The protein belongs to the universal ribosomal protein uL18 family. In terms of assembly, part of the 50S ribosomal subunit; part of the 5S rRNA/L5/L18/L25 subcomplex. Contacts the 5S and 23S rRNAs.

This is one of the proteins that bind and probably mediate the attachment of the 5S RNA into the large ribosomal subunit, where it forms part of the central protuberance. In Thioalkalivibrio sulfidiphilus (strain HL-EbGR7), this protein is Large ribosomal subunit protein uL18.